Reading from the N-terminus, the 369-residue chain is Spore membrane assembly protein 2 (369 aa).

The Cytoplasmic segment spans residues 1–6 (MLFPKR). A helical transmembrane segment spans residues 7–27 (LIVWGVLLILSLSQFVLYLPA). Topologically, residues 28 to 220 (TTCTNSKGLR…NLAFILMMFN (193 aa)) are lumenal. A helical transmembrane segment spans residues 221-241 (GMVFYFAVLEIIVGFLSICVV). Topologically, residues 242-265 (SAFGGALSVGKRHRLFPMLLKSSS) are cytoplasmic. Residues 266–286 (SILVVIATLTILCNIVYLIAL) form a helical membrane-spanning segment. Over 287–319 (KTLEPEEVTDVGSDNAAVHTTGWELLKVNVGSG) the chain is Lumenal. Residues 320–340 (FIMGLARYAIQWVLLVLAFLA) form a helical membrane-spanning segment. Residues 341 to 369 (ANHYKAKPKKSDKYTEDTSNSPSPDLMEK) are Cytoplasmic-facing. Positions 348–369 (PKKSDKYTEDTSNSPSPDLMEK) are disordered.

Belongs to the SMA2 family.

Its subcellular location is the prospore membrane. It localises to the endoplasmic reticulum. Involved in spore and ascus formation. Required for the efficient assembly of the precursors of the prospore membrane to a continuous prospore membrane. The chain is Spore membrane assembly protein 2 (SMA2) from Saccharomyces cerevisiae (strain ATCC 204508 / S288c) (Baker's yeast).